A 692-amino-acid polypeptide reads, in one-letter code: Protein hook (692 aa).

Residues 6 to 123 (SEMYYSLLEW…RLLQLVLGCA (118 aa)) form the Calponin-homology (CH) domain. A coiled-coil region spans residues 135–576 (EIMGLEEELQ…YQSKVIQLET (442 aa)). Positions 161–180 (AGERSPSSSASGGAGSGGAV) are disordered.

The protein belongs to the hook family. As to quaternary structure, homodimer. Interacts with microtubules via its N-terminus.

It is found in the cytoplasm. The protein resides in the cytoskeleton. It localises to the endosome. Its subcellular location is the synapse. Its function is as follows. Involved in endocytic trafficking by stabilizing organelles of the endocytic pathway. Probably acts as a cytoskeletal linker protein required to tether endosome vesicles to the cytoskeleton. Involved in modulation of endocytosis at stages required for down-regulation of membrane proteins that control synapse size. Not involved in synaptic vesicle recycling. Required in R7 cells for boss endocytosis into multivesicular bodies (MVBs). Has a role in regulating adult longevity. This is Protein hook from Drosophila willistoni (Fruit fly).